Consider the following 100-residue polypeptide: Small ribosomal subunit protein uS14c (100 aa).

The segment at 1–54 (MARKSLIQRERKRQKLEQKFHSIRRSSKKEISKVSSLSGKWEIHGKLQSPPRNS) is disordered.

The protein belongs to the universal ribosomal protein uS14 family. Part of the 30S ribosomal subunit.

It localises to the plastid. It is found in the chloroplast. Functionally, binds 16S rRNA, required for the assembly of 30S particles. In Piper cenocladum (Ant piper), this protein is Small ribosomal subunit protein uS14c.